Here is a 674-residue protein sequence, read N- to C-terminus: Probable copper-transporting P-type ATPase B (674 aa).

The segment at 1 to 22 is disordered; it reads MNHSNQMHHDNHESHNHHSGHA. Basic and acidic residues predominate over residues 7–16; sequence MHHDNHESHN. The next 6 helical transmembrane spans lie at 32–52, 57–77, 95–115, 127–147, 284–304, and 315–335; these read FFVS…MGVN, FTFP…FFYG, GMMT…LYAF, TMDF…GHWI, GYLF…WMLI, and LVTV…PLVT. Asp367 acts as the 4-aspartylphosphate intermediate in catalysis. Mg(2+) contacts are provided by Asp565 and Asp569. Transmembrane regions (helical) follow at residues 623-645 and 649-671; these read LWWG…AFIG and SPAI…AFTL.

The protein belongs to the cation transport ATPase (P-type) (TC 3.A.3) family. Type IB subfamily.

It localises to the cell membrane. The catalysed reaction is Cu(+)(in) + ATP + H2O = Cu(+)(out) + ADP + phosphate + H(+). In terms of biological role, involved in copper transport. This Staphylococcus epidermidis (strain ATCC 35984 / DSM 28319 / BCRC 17069 / CCUG 31568 / BM 3577 / RP62A) protein is Probable copper-transporting P-type ATPase B (copB).